A 496-amino-acid chain; its full sequence is Apolipoprotein N-acyltransferase (496 aa).

A run of 6 helical transmembrane segments spans residues 6-26, 50-70, 77-97, 114-134, 148-168, and 183-203; these read IICF…FFIP, FGYL…SIGV, FWWA…FFIS, LIFC…CTGL, ILIQ…VIYI, and LKIL…YGAM. A CN hydrolase domain is found at 220 to 464; it reads VQPSIPQTAK…QGLIPQKLTT (245 aa). Glu-259 (proton acceptor) is an active-site residue. The active site involves Lys-322. Catalysis depends on Cys-372, which acts as the Nucleophile. Residues 474 to 494 form a helical membrane-spanning segment; sequence FAMLLPIVFILLIHYLLSLIF.

The protein belongs to the CN hydrolase family. Apolipoprotein N-acyltransferase subfamily.

It localises to the cell inner membrane. It catalyses the reaction N-terminal S-1,2-diacyl-sn-glyceryl-L-cysteinyl-[lipoprotein] + a glycerophospholipid = N-acyl-S-1,2-diacyl-sn-glyceryl-L-cysteinyl-[lipoprotein] + a 2-acyl-sn-glycero-3-phospholipid + H(+). It participates in protein modification; lipoprotein biosynthesis (N-acyl transfer). Its function is as follows. Catalyzes the phospholipid dependent N-acylation of the N-terminal cysteine of apolipoprotein, the last step in lipoprotein maturation. This chain is Apolipoprotein N-acyltransferase, found in Rickettsia typhi (strain ATCC VR-144 / Wilmington).